Consider the following 134-residue polypeptide: ATP synthase epsilon chain, chloroplastic (134 aa).

It belongs to the ATPase epsilon chain family. As to quaternary structure, F-type ATPases have 2 components, CF(1) - the catalytic core - and CF(0) - the membrane proton channel. CF(1) has five subunits: alpha(3), beta(3), gamma(1), delta(1), epsilon(1). CF(0) has three main subunits: a, b and c.

The protein resides in the plastid. It localises to the chloroplast thylakoid membrane. Functionally, produces ATP from ADP in the presence of a proton gradient across the membrane. The sequence is that of ATP synthase epsilon chain, chloroplastic from Phalaenopsis aphrodite subsp. formosana (Moth orchid).